Reading from the N-terminus, the 146-residue chain is Large ribosomal subunit protein uL15 (146 aa).

Residues 1–13 are compositionally biased toward basic and acidic residues; sequence MKLHELKPAEGSR. The disordered stretch occupies residues 1 to 52; it reads MKLHELKPAEGSRKVRNRVGRGIGSGNGKTAGKGHKGQNARSGGGVRLGFEG. Composition is skewed to gly residues over residues 21–31 and 42–52; these read RGIGSGNGKTA and SGGGVRLGFEG.

Belongs to the universal ribosomal protein uL15 family. In terms of assembly, part of the 50S ribosomal subunit.

Its function is as follows. Binds to the 23S rRNA. The sequence is that of Large ribosomal subunit protein uL15 from Bacillus cereus (strain B4264).